The chain runs to 408 residues: MQVEILATGDELLTGQVVDTNSPWLMDRLWDLGLMVRRKTLVADDRDDLRASILETTARADLVVMSGGMGPTEDDLTSECVAAVLGVPLERHEPSIEVLRERFRKFGRALTPNNEKQAWFPRGAEVIPNRWGSAPGFTVPVGRGRVVCLPGVPVEYRGLCEEWVLPHVGARLGEVPAAGLVKLFAVPESHADHAMRPVMDDPANAGVRFGYRAHWPETHVKWTVPGPGAAARAARIRERVLGIFGEQVFGEGKDELPELVVARLAARGERVALGESCTGGMVAELLTAVPGASAVLDLGVVAYANAAKERVLGVPAELLAAHGAVSEPVARALAEGARRTGGAAWGVGITGIAGPSGGTPEKPVGTVHLAVAGPSGTEAVARAYRGDRDRVRRQAAYEALNLLRLALR.

The protein belongs to the CinA family.

This Anaeromyxobacter sp. (strain K) protein is CinA-like protein.